Here is a 101-residue protein sequence, read N- to C-terminus: Putative pterin-4-alpha-carbinolamine dehydratase (101 aa).

It belongs to the pterin-4-alpha-carbinolamine dehydratase family.

The enzyme catalyses (4aS,6R)-4a-hydroxy-L-erythro-5,6,7,8-tetrahydrobiopterin = (6R)-L-erythro-6,7-dihydrobiopterin + H2O. This chain is Putative pterin-4-alpha-carbinolamine dehydratase, found in Rhizobium rhizogenes (strain K84 / ATCC BAA-868) (Agrobacterium radiobacter).